The primary structure comprises 494 residues: Ketol-acid reductoisomerase (NADP(+)) (494 aa).

Residues 14 to 208 form the KARI N-terminal Rossmann domain; it reads LDQLGRCRFM…GGHRAGVLES (195 aa). Residues 45-48, Arg68, Arg76, Ser78, and 108-110 each bind NADP(+); these read CGAQ and DKQ. The active site involves His132. Gly158 provides a ligand contact to NADP(+). KARI C-terminal knotted domains follow at residues 209 to 344 and 345 to 487; these read SFVA…NYPV and TDVE…MTDM. Mg(2+) contacts are provided by Asp217, Glu221, Glu389, and Glu393. Ser414 lines the substrate pocket.

The protein belongs to the ketol-acid reductoisomerase family. Mg(2+) serves as cofactor.

The catalysed reaction is (2R)-2,3-dihydroxy-3-methylbutanoate + NADP(+) = (2S)-2-acetolactate + NADPH + H(+). It catalyses the reaction (2R,3R)-2,3-dihydroxy-3-methylpentanoate + NADP(+) = (S)-2-ethyl-2-hydroxy-3-oxobutanoate + NADPH + H(+). It participates in amino-acid biosynthesis; L-isoleucine biosynthesis; L-isoleucine from 2-oxobutanoate: step 2/4. Its pathway is amino-acid biosynthesis; L-valine biosynthesis; L-valine from pyruvate: step 2/4. Involved in the biosynthesis of branched-chain amino acids (BCAA). Catalyzes an alkyl-migration followed by a ketol-acid reduction of (S)-2-acetolactate (S2AL) to yield (R)-2,3-dihydroxy-isovalerate. In the isomerase reaction, S2AL is rearranged via a Mg-dependent methyl migration to produce 3-hydroxy-3-methyl-2-ketobutyrate (HMKB). In the reductase reaction, this 2-ketoacid undergoes a metal-dependent reduction by NADPH to yield (R)-2,3-dihydroxy-isovalerate. The sequence is that of Ketol-acid reductoisomerase (NADP(+)) from Photobacterium profundum (strain SS9).